A 599-amino-acid chain; its full sequence is Kelch-like protein 24a (599 aa).

The region spanning 65–132 (TDVIISVQGR…VYTGRACITT (68 aa)) is the BTB domain. One can recognise a BACK domain in the interval 167-269 (CLGIQRFADA…HPNYFVQTVE (103 aa)). Kelch repeat units lie at residues 313–362 (VIVV…ALRN), 364–406 (IILS…VLLG), 407–453 (KVYA…SCAG), 455–501 (LFVI…SLNH), 503–543 (IYVC…VCNG), and 545–591 (IYIL…TVHR).

Forms homodimers. Component of the BCR(KLHL24) E3 ubiquitin ligase complex.

The protein localises to the perikaryon. It is found in the cell projection. Its subcellular location is the axon. It localises to the cytoplasm. The protein resides in the cell junction. The protein localises to the desmosome. It is found in the adherens junction. Necessary to maintain the balance between intermediate filament stability and degradation, a process that is essential for skin integrity. Reduces kainate receptor-mediated currents in brain neurons, most probably by modulating channel properties. It is required for proper heart development. This is Kelch-like protein 24a from Danio rerio (Zebrafish).